Here is a 100-residue protein sequence, read N- to C-terminus: MELTPREKDKLLLFTAGLVAERRLAKGLKLNYPESVALISCAIMEGAREGKTVAQLMSEGRAVLTAEQVMEGIPEMIKDIQVECTFPDGTKLVSIHDPIV.

Belongs to the urease gamma subunit family. In terms of assembly, heterotrimer of UreA (gamma), UreB (beta) and UreC (alpha) subunits. Three heterotrimers associate to form the active enzyme.

The protein resides in the cytoplasm. The catalysed reaction is urea + 2 H2O + H(+) = hydrogencarbonate + 2 NH4(+). The protein operates within nitrogen metabolism; urea degradation; CO(2) and NH(3) from urea (urease route): step 1/1. This is Urease subunit gamma from Proteus hauseri.